The sequence spans 139 residues: Gas vesicle protein A (139 aa).

Positions 113 to 139 (EKLGDMLTSDEPEPRKATRVRSRRADR) are disordered. Positions 129 to 139 (ATRVRSRRADR) are enriched in basic residues.

This sequence belongs to the gas vesicle GvpA family. The gas vesicle shell is 2 nm thick and consists of a single layer of this protein. It forms helical ribs nearly perpendicular to the long axis of the vesicle.

The protein resides in the gas vesicle shell. In terms of biological role, gas vesicles are hollow, gas filled proteinaceous nanostructures found in some microorganisms. During planktonic growth they allow positioning of the organism at a favorable depth for light or nutrient acquisition. GvpA forms the protein shell. The polypeptide is Gas vesicle protein A (Mycobacterium sp. (strain JLS)).